The sequence spans 197 residues: Large ribosomal subunit protein bL17 (197 aa).

Residues 136 to 197 (RAAKKADAPQ…DAEKSSDTEK (62 aa)) are disordered. Residues 148 to 187 (VADEATDADESVEDEAPAQDDSADEVEAAADETPADDAEA) are compositionally biased toward acidic residues. Residues 188–197 (DAEKSSDTEK) show a composition bias toward basic and acidic residues.

This sequence belongs to the bacterial ribosomal protein bL17 family. As to quaternary structure, part of the 50S ribosomal subunit. Contacts protein L32.

This Beutenbergia cavernae (strain ATCC BAA-8 / DSM 12333 / CCUG 43141 / JCM 11478 / NBRC 16432 / NCIMB 13614 / HKI 0122) protein is Large ribosomal subunit protein bL17.